Here is a 505-residue protein sequence, read N- to C-terminus: ADP-ribosylarginine hydrolase CG2909 (505 aa).

The ADP-D-ribose site is built by arginine 198, glycine 336, glycine 338, glycine 340, valine 341, tryptophan 342, tryptophan 377, aspartate 432, asparagine 439, glutamate 440, glycine 450, and aspartate 451.

The catalysed reaction is N(omega)-(ADP-D-ribosyl)-L-arginyl-[protein] + H2O = ADP-D-ribose + L-arginyl-[protein]. It catalyses the reaction N(omega)-(ADP-D-ribosyl)-L-arginine + H2O = ADP-D-ribose + L-arginine. Its function is as follows. Protein ADP-ribosyl hydrolase that specifically removes mono-ADP-ribosyl modifications from protein arginine residues. The chain is ADP-ribosylarginine hydrolase CG2909 from Drosophila melanogaster (Fruit fly).